Reading from the N-terminus, the 504-residue chain is MEEFQVYLELNRSRRHDFLYPLIFREYIYALAHEHGLNKSMIFFENQGYGNKFSSPIVKRLILRMDQQNRLISSANDSNQNPVFGHNNNLYSQMIAAGFAVIVEIPFSLRLISYSQGAEAAKSHNFQSIHSIFPFLEDKFSHLNYVLEALIPHPIHLEILVQALRYWVKDACSLHLLRFSLYEYCNLKSFITPKKSISIFNPRLFLFLYNSHTCEYESIFLFLRNQSSHLRSTSSGVFLERIFFYGKIKYLGEVFYNDFQNNLWLFKDPFIHFIRYQGKSILASKDTSLLINKWKYYFVDLWQYYFYLWSQSGRVRINQLSKYSLDFLGYLSSVRLNPSVVRSQMLENSFLIDNAVKTLDTRIPIISLIGSLSKAKFCNTLGHPISKPTWADSPDSDIIDRFVRISRNLSHYHSGSSKKKSLYRIKYILRFSCVKTLARKHKSTVRAFLKKLGSEFLEEFFTETEEEHVFSLIFPRGFFALRKVYRGRIWYLDIICINALVNHS.

Belongs to the intron maturase 2 family. MatK subfamily.

It is found in the plastid. The protein resides in the chloroplast. In terms of biological role, usually encoded in the trnK tRNA gene intron. Probably assists in splicing its own and other chloroplast group II introns. This is Maturase K from Gossypium turneri (Cotton).